Here is a 352-residue protein sequence, read N- to C-terminus: Molybdenum import ATP-binding protein ModC (352 aa).

The ABC transporter domain occupies 1–229 (MLELNFSQTL…SVMHPWLPKE (229 aa)). Residue 31–38 (GVSGAGKT) coordinates ATP. A Mop domain is found at 289–352 (QTSIRNVLRA…AQVKSVSITA (64 aa)).

The protein belongs to the ABC transporter superfamily. Molybdate importer (TC 3.A.1.8) family. In terms of assembly, the complex is composed of two ATP-binding proteins (ModC), two transmembrane proteins (ModB) and a solute-binding protein (ModA).

It localises to the cell inner membrane. The catalysed reaction is molybdate(out) + ATP + H2O = molybdate(in) + ADP + phosphate + H(+). In terms of biological role, part of the ABC transporter complex ModABC involved in molybdenum import. Responsible for energy coupling to the transport system. This is Molybdenum import ATP-binding protein ModC from Salmonella paratyphi A (strain ATCC 9150 / SARB42).